A 529-amino-acid chain; its full sequence is Listeriolysin O (529 aa).

An N-terminal signal peptide occupies residues 1–24; the sequence is MKKIMLVFITLILVSLPIAQQTEA. 4 beta stranded membrane passes run 214-227, 234-243, 312-321, and 329-341; these read ESQL…AFKA, VNFGAISEGK, STKVKAAFDA, and SGDV…IKNS. A Conserved undecapeptide motif is present at residues 483 to 493; it reads ECTGLAWEWWR. The Cholesterol binding motif lies at 515 to 516; that stretch reads TL.

This sequence belongs to the cholesterol-dependent cytolysin family. Homooligomeric pore complex of 35 to 50 subunits; when inserted in the host membrane.

Its subcellular location is the secreted. It is found in the host membrane. The protein localises to the host cell membrane. With respect to regulation, activity of listeriolysin O is regulated on multiple levels. It should be high in the phagosome, thereby allowing escape of the bacteria from the phagosomal compartment. Then, once inside the host cytosol, the activity must be controlled to prevent lysis of the host plasma membrane and loss of the intracellular environment. A cholesterol-dependent toxin that causes cytolysis by forming pores in cholesterol containing host membranes. After binding to target membranes, the protein undergoes a major conformation change, leading to its insertion in the host membrane and formation of an oligomeric pore complex. Cholesterol is required for binding to host membranes, membrane insertion and pore formation; cholesterol binding is mediated by a Thr-Leu pair in the C-terminus. Acts as a major virulence factor required for the escape of bacteria from phagosomal vacuoles and entry into the host cytosol. Can be reversibly inactivated by oxidation. The polypeptide is Listeriolysin O (hly) (Listeria monocytogenes serotype 4b (strain CLIP80459)).